The primary structure comprises 383 residues: Dimethylsulfoniopropionate lyase 3 (383 aa).

The protein belongs to the aspartate/glutamate racemases family. ALMA1 subfamily. Homotetramer.

It catalyses the reaction S,S-dimethyl-beta-propiothetin = acrylate + dimethyl sulfide + H(+). Its function is as follows. Mediates cleavage of dimethylsulfoniopropionate (DMSP) into dimethyl sulfide (DMS) and acrylate. DMS is the principal form by which sulfur is transported from oceans to the atmosphere and is a key component of the ocean sulfur cycle. This chain is Dimethylsulfoniopropionate lyase 3, found in Emiliania huxleyi (strain CCMP1516).